The following is a 295-amino-acid chain: Pyridoxal 5'-phosphate synthase subunit PdxS (295 aa).

D-ribose 5-phosphate is bound at residue D25. The Schiff-base intermediate with D-ribose 5-phosphate role is filled by K82. Position 154 (G154) interacts with D-ribose 5-phosphate. Residue R166 coordinates D-glyceraldehyde 3-phosphate. Residues G215 and 236–237 (GS) each bind D-ribose 5-phosphate.

It belongs to the PdxS/SNZ family. In the presence of PdxT, forms a dodecamer of heterodimers.

It catalyses the reaction aldehydo-D-ribose 5-phosphate + D-glyceraldehyde 3-phosphate + L-glutamine = pyridoxal 5'-phosphate + L-glutamate + phosphate + 3 H2O + H(+). Its pathway is cofactor biosynthesis; pyridoxal 5'-phosphate biosynthesis. Functionally, catalyzes the formation of pyridoxal 5'-phosphate from ribose 5-phosphate (RBP), glyceraldehyde 3-phosphate (G3P) and ammonia. The ammonia is provided by the PdxT subunit. Can also use ribulose 5-phosphate and dihydroxyacetone phosphate as substrates, resulting from enzyme-catalyzed isomerization of RBP and G3P, respectively. The sequence is that of Pyridoxal 5'-phosphate synthase subunit PdxS from Heliobacterium modesticaldum (strain ATCC 51547 / Ice1).